We begin with the raw amino-acid sequence, 258 residues long: C1q-related factor (258 aa).

The N-terminal stretch at methionine 1–glycine 16 is a signal peptide. The segment at glycine 39–serine 120 is disordered. Residues glycine 67–lysine 77 show a composition bias toward low complexity. In terms of domain architecture, Collagen-like spans glycine 67 to glycine 115. A compositionally biased stretch (pro residues) spans proline 78–proline 95. In terms of domain architecture, C1q spans threonine 125 to aspartate 258.

In terms of assembly, interacts with ADGRB3. Forms heterooligomers with C1QL4, when proteins are coexpressed; this interaction does not occur after secretion. As to expression, expressed in brainstem. More abundant in areas of the nervous system involved in motor function, such as the Purkinje cells of the cerebellum, the accessory olivary nucleus, the pons and the red nucleus.

The protein resides in the secreted. Its function is as follows. May regulate the number of excitatory synapses that are formed on hippocampus neurons. Has no effect on inhibitory synapses. This is C1q-related factor (C1ql1) from Mus musculus (Mouse).